A 484-amino-acid chain; its full sequence is Fumarate hydratase class II (484 aa).

The segment at 1–22 (MPSILDLPIGTGATGKRKESDS) is disordered. Residues 110-112 (SGT), 141-144 (HPND), 151-153 (SSN), and Thr199 contribute to the substrate site. The Proton donor/acceptor role is filled by His200. Ser330 is an active-site residue. Substrate contacts are provided by residues Ser331 and 336 to 338 (KVN).

It belongs to the class-II fumarase/aspartase family. Fumarase subfamily. In terms of assembly, homotetramer.

The protein resides in the cytoplasm. The catalysed reaction is (S)-malate = fumarate + H2O. It participates in carbohydrate metabolism; tricarboxylic acid cycle; (S)-malate from fumarate: step 1/1. Its function is as follows. Involved in the TCA cycle. Catalyzes the stereospecific interconversion of fumarate to L-malate. The chain is Fumarate hydratase class II from Methanosarcina acetivorans (strain ATCC 35395 / DSM 2834 / JCM 12185 / C2A).